A 121-amino-acid polypeptide reads, in one-letter code: U15-barytoxin-Tl1b (121 aa).

The signal sequence occupies residues 1–16 (MKLFMVLVASFAFAVA). Cystine bridges form between C54–C72, C65–C78, C69–C119, and C71–C90.

Belongs to the neurotoxin 03 (Tx2) family. 03 subfamily. As to expression, expressed by the venom gland.

The protein localises to the secreted. Ion channel inhibitor. This chain is U15-barytoxin-Tl1b, found in Trittame loki (Brush-footed trapdoor spider).